A 215-amino-acid polypeptide reads, in one-letter code: MTKLTARQQQVFDLIRRAIERSGFPPTRAEIAAELGFSSPNAAEEHLRALARKGVIELAAGASRGIRLLGVDDAPHQFTLPHAALMQLSLPLVGRVAAGSPILAQEHISQHYACDPALFTSKPDYLLKVRGLSMRDAGILDGDLLAVQKRTEAKDGQIIVARLGDDVTVKRLMRRPGGLELIAENPDYENIFVKAGSADFALEGIAVGLIRSGEL.

Residues 28–48 (RAEIAAELGFSSPNAAEEHLR) constitute a DNA-binding region (H-T-H motif). Catalysis depends on for autocatalytic cleavage activity residues serine 133 and lysine 170.

This sequence belongs to the peptidase S24 family. In terms of assembly, homodimer.

The enzyme catalyses Hydrolysis of Ala-|-Gly bond in repressor LexA.. Functionally, represses a number of genes involved in the response to DNA damage (SOS response), including recA and lexA. In the presence of single-stranded DNA, RecA interacts with LexA causing an autocatalytic cleavage which disrupts the DNA-binding part of LexA, leading to derepression of the SOS regulon and eventually DNA repair. The polypeptide is LexA repressor (Burkholderia cenocepacia (strain ATCC BAA-245 / DSM 16553 / LMG 16656 / NCTC 13227 / J2315 / CF5610) (Burkholderia cepacia (strain J2315))).